The following is a 310-amino-acid chain: Acetylglutamate kinase (310 aa).

Residues Gly-76–Gly-77, Arg-98, and Asn-203 each bind substrate.

The protein belongs to the acetylglutamate kinase family. ArgB subfamily.

Its subcellular location is the cytoplasm. The catalysed reaction is N-acetyl-L-glutamate + ATP = N-acetyl-L-glutamyl 5-phosphate + ADP. The protein operates within amino-acid biosynthesis; L-arginine biosynthesis; N(2)-acetyl-L-ornithine from L-glutamate: step 2/4. Catalyzes the ATP-dependent phosphorylation of N-acetyl-L-glutamate. In Cutibacterium acnes (strain DSM 16379 / KPA171202) (Propionibacterium acnes), this protein is Acetylglutamate kinase.